The primary structure comprises 184 residues: Flavin prenyltransferase UbiX (184 aa).

Residues 9-11 (GAS), S34, 85-88 (SMKT), and R120 contribute to the FMN site. Dimethylallyl phosphate contacts are provided by Y150 and R166.

This sequence belongs to the UbiX/PAD1 family.

It carries out the reaction dimethylallyl phosphate + FMNH2 = prenylated FMNH2 + phosphate. Functionally, flavin prenyltransferase that catalyzes the synthesis of the prenylated FMN cofactor (prenyl-FMN) for 4-hydroxy-3-polyprenylbenzoic acid decarboxylase UbiD. The prenyltransferase is metal-independent and links a dimethylallyl moiety from dimethylallyl monophosphate (DMAP) to the flavin N5 and C6 atoms of FMN. The chain is Flavin prenyltransferase UbiX from Methanocaldococcus jannaschii (strain ATCC 43067 / DSM 2661 / JAL-1 / JCM 10045 / NBRC 100440) (Methanococcus jannaschii).